The sequence spans 763 residues: MKEFEVKVASTAFVLVLFSLTINQILASETSTKFRSPVPAPTVPDWNHLPNEGNEENVVSAPKQDGASGGQKPYWTKREKMMKRLHAEPAGNTVRFRCAVDGNPKPQVLWYKNDLIVQKNDRVGGYKYRNQVLILESVVLSDKGNYMCVARNEYGSINHTYQLDVQERSASKPILAEGLPQNKSAYIGDDVTFKCKVYSDAHPHIQWLKSINNHNNAAPNYTVLKAAGVNTTDLDMEVLILKNVSFEEAGEYTCLAGNSIGISHQSAWLSVLPVPPPTTDTITKGIPNETNIIIYVMCGVLVILFGLAVVLVLYYHCYNGKDPPMLVRIENPDNIPPMTKIEHPTMLFGNTQAWQRMCMPMQEPFEFNIQLDLQWELQREDITLVERLDEGFFGQVFKADLVTCNNTRKEKMVCAVKMLKGNRNEKDVLDLLTEMDQMKRVGKHKNIINLLGVCTQNGPLWLVIEYAAQGNLRDYLRRNRPQNTLCNLVLPSEGRNPDDELPVPHGDTLTQKDIVSFAFQVARGLEFLAQKKCIHRDLAARNVLVTEELVMKIADFGLARDIRSCDYYRKHTRGHLPYKWMALEAMSDNIFTHATDVWSFGVLLWEIFSLAGSPYPGIKTHELVKFLRSGERLDKPQYASQEMYRLMRDCWEEDPSKRPNFRTLVEDLDRMLAESSTEVYIDFAAGCEAEYSESSEDESESQNSDEEDDDSVFERMRQIDSLSNGNIPFNEEDSSNSDPYVAPLLQNEENVLQNEHARLRSEA.

The first 27 residues, 1–27 (MKEFEVKVASTAFVLVLFSLTINQILA), serve as a signal peptide directing secretion. The Extracellular portion of the chain corresponds to 28-291 (SETSTKFRSP…ITKGIPNETN (264 aa)). The interval 34–74 (FRSPVPAPTVPDWNHLPNEGNEENVVSAPKQDGASGGQKPY) is disordered. Ig-like C2-type domains follow at residues 73–164 (PYWT…YQLD) and 173–270 (PILA…AWLS). Residues C98 and C148 are joined by a disulfide bond. N-linked (GlcNAc...) asparagine glycosylation is found at N158, N182, N220, N230, N243, and N288. A disulfide bond links C195 and C254. The chain crosses the membrane as a helical span at residues 292–312 (IIIYVMCGVLVILFGLAVVLV). Topologically, residues 313–763 (LYYHCYNGKD…NEHARLRSEA (451 aa)) are cytoplasmic. A Protein kinase domain is found at 382–672 (ITLVERLDEG…TLVEDLDRML (291 aa)). Residues 388–396 (LDEGFFGQV) and K417 each bind ATP. The Proton acceptor role is filled by D537. Y568 is modified (phosphotyrosine; by autocatalysis). The segment covering 691 to 711 (YSESSEDESESQNSDEEDDDS) has biased composition (acidic residues). A disordered region spans residues 691–742 (YSESSEDESESQNSDEEDDDSVFERMRQIDSLSNGNIPFNEEDSSNSDPYVA).

The protein belongs to the protein kinase superfamily. Tyr protein kinase family. Fibroblast growth factor receptor subfamily.

It is found in the membrane. It catalyses the reaction L-tyrosyl-[protein] + ATP = O-phospho-L-tyrosyl-[protein] + ADP + H(+). Its function is as follows. Receptor for basic fibroblast growth factor. The sequence is that of Fibroblast growth factor receptor (FGFR) from Halocynthia roretzi (Sea squirt).